Reading from the N-terminus, the 370-residue chain is UDP-3-O-acylglucosamine N-acyltransferase (370 aa).

His252 (proton acceptor) is an active-site residue. The tract at residues 348 to 370 is disordered; sequence NAAAEKRDGPAPNAASKATGDKV.

Belongs to the transferase hexapeptide repeat family. LpxD subfamily. As to quaternary structure, homotrimer.

It catalyses the reaction a UDP-3-O-[(3R)-3-hydroxyacyl]-alpha-D-glucosamine + a (3R)-hydroxyacyl-[ACP] = a UDP-2-N,3-O-bis[(3R)-3-hydroxyacyl]-alpha-D-glucosamine + holo-[ACP] + H(+). It functions in the pathway bacterial outer membrane biogenesis; LPS lipid A biosynthesis. Functionally, catalyzes the N-acylation of UDP-3-O-acylglucosamine using 3-hydroxyacyl-ACP as the acyl donor. Is involved in the biosynthesis of lipid A, a phosphorylated glycolipid that anchors the lipopolysaccharide to the outer membrane of the cell. The polypeptide is UDP-3-O-acylglucosamine N-acyltransferase (Paraburkholderia phytofirmans (strain DSM 17436 / LMG 22146 / PsJN) (Burkholderia phytofirmans)).